The primary structure comprises 422 residues: Serine hydroxymethyltransferase (422 aa).

Residue 121–123 (GHI) coordinates (6S)-5,6,7,8-tetrahydrofolate. Lysine 227 carries the N6-(pyridoxal phosphate)lysine modification. Glutamate 245 lines the (6S)-5,6,7,8-tetrahydrofolate pocket.

The protein belongs to the SHMT family. Homodimer. It depends on pyridoxal 5'-phosphate as a cofactor.

Its subcellular location is the cytoplasm. It carries out the reaction 5,10-methylenetetrahydromethanopterin + glycine + H2O = 5,6,7,8-tetrahydromethanopterin + L-serine. Its pathway is amino-acid biosynthesis; glycine biosynthesis; glycine from L-serine: step 1/1. Catalyzes the reversible interconversion of serine and glycine with tetrahydromethanopterin (H4MPT) serving as the one-carbon carrier. Also exhibits a pteridine-independent aldolase activity toward beta-hydroxyamino acids, producing glycine and aldehydes, via a retro-aldol mechanism. This is Serine hydroxymethyltransferase from Methanobrevibacter smithii (strain ATCC 35061 / DSM 861 / OCM 144 / PS).